Reading from the N-terminus, the 545-residue chain is Chaperonin GroEL (545 aa).

Residues 29–32 (TLGP), K50, 86–90 (DGTTT), G415, and D495 contribute to the ATP site.

This sequence belongs to the chaperonin (HSP60) family. As to quaternary structure, forms a cylinder of 14 subunits composed of two heptameric rings stacked back-to-back. Interacts with the co-chaperonin GroES.

The protein resides in the cytoplasm. The enzyme catalyses ATP + H2O + a folded polypeptide = ADP + phosphate + an unfolded polypeptide.. Its function is as follows. Together with its co-chaperonin GroES, plays an essential role in assisting protein folding. The GroEL-GroES system forms a nano-cage that allows encapsulation of the non-native substrate proteins and provides a physical environment optimized to promote and accelerate protein folding. In Porphyromonas gingivalis (strain ATCC 33277 / DSM 20709 / CIP 103683 / JCM 12257 / NCTC 11834 / 2561), this protein is Chaperonin GroEL.